We begin with the raw amino-acid sequence, 152 residues long: Small ribosomal subunit protein uS15 (152 aa).

Positions 1–11 (MAKMHTKRKGK) are enriched in basic residues. A disordered region spans residues 1 to 22 (MAKMHTKRKGKSSSTRPIRTEP).

Belongs to the universal ribosomal protein uS15 family. As to quaternary structure, part of the 30S ribosomal subunit.

The polypeptide is Small ribosomal subunit protein uS15 (Methanosarcina barkeri (strain Fusaro / DSM 804)).